An 899-amino-acid chain; its full sequence is Tuberous sclerosis 1 protein homolog (899 aa).

Coiled-coil stretches lie at residues L540–I706 and S737–N847. A disordered region spans residues N874–Y899. The span at T889–Y899 shows a compositional bias: polar residues.

In terms of assembly, interacts with tsc2.

It localises to the cytoplasm. Together with tsc2, required for uptake of various amino acids from the environment and for proper conjugation. Involved in induction of gene expression of permeases and genes required for meiosis upon nitrogen starvation. May act as a GTPase-activating protein (GAP) for the small GTPase rhb1. The protein is Tuberous sclerosis 1 protein homolog (tsc1) of Schizosaccharomyces pombe (strain 972 / ATCC 24843) (Fission yeast).